Consider the following 521-residue polypeptide: Colicin-E1* (521 aa).

Disordered regions lie at residues 26–52 and 127–163; these read NGNP…AAIH and SGCA…EKEQ. Over residues 30 to 42 the composition is skewed to gly residues; sequence DGSGSGGGGGTGG. Residues 133–145 show a composition bias toward basic residues; it reads KQKKKPVKKRKRA. Residues 146-163 show a composition bias toward basic and acidic residues; sequence EKSFQEAEQRRKEIEKEQ. A run of 2 helical transmembrane segments spans residues 470-486 and 493-509; these read AVDA…FSVL and IWGI…FIDK.

Belongs to the channel forming colicin family.

It localises to the cell membrane. This colicin is a channel-forming colicin. This class of transmembrane toxins depolarize the cytoplasmic membrane, leading to dissipation of cellular energy. In terms of biological role, colicins are polypeptide toxins produced by and active against E.coli and closely related bacteria. In Shigella sonnei, this protein is Colicin-E1* (cea).